A 71-amino-acid chain; its full sequence is UPF0346 protein SMU_1621c (71 aa).

The protein belongs to the UPF0346 family.

The protein is UPF0346 protein SMU_1621c of Streptococcus mutans serotype c (strain ATCC 700610 / UA159).